Here is a 415-residue protein sequence, read N- to C-terminus: G-protein coupled receptor daf-38 (415 aa).

Low complexity predominate over residues 1-19 (MLLPSNLTTSTLMTSSSES). The segment at 1 to 25 (MLLPSNLTTSTLMTSSSESYDADNP) is disordered. Topologically, residues 1–35 (MLLPSNLTTSTLMTSSSESYDADNPGLPPEPILSD) are extracellular. A helical membrane pass occupies residues 36 to 56 (YVEMFTLVLNFIVGAPLNLAA). Residues 57 to 75 (YTQLSERPTSTRLDLLKRS) are Cytoplasmic-facing. The helical transmembrane segment at 76–96 (LNYSDLLVLFIYVPSRACWLL) threads the bilayer. Residues 97–108 (TYDWRGGDALCK) are Extracellular-facing. Residues Cys107 and Cys187 are joined by a disulfide bond. A helical membrane pass occupies residues 109–129 (IVKMFHTFAFQSSSNVIVCIA). Residues 130–152 (VDRLLSVLSPSHHSPNKALKRTK) lie on the Cytoplasmic side of the membrane. A helical membrane pass occupies residues 153–173 (MMLIVAWIVALVISCPQLFIW). The Extracellular segment spans residues 174–222 (KAYLALPEYNWSQCLQIWEIARMEKFNKPQVVPEFDAEFWYSILHISLV). A helical transmembrane segment spans residues 223-243 (FWIPCIIIMLSYIIVISWVWI). The Cytoplasmic segment spans residues 244–345 (NSRPSIRHTS…NLNRSRALRV (102 aa)). A helical transmembrane segment spans residues 346–366 (SLLLVVAYIICWLPYNLISLI). Topologically, residues 367 to 382 (QFLDRDFFSSYLKHVH) are extracellular. Residues 383 to 403 (FCQQLIIFNSVVNPWLYGFFG) traverse the membrane as a helical segment. At 404–415 (PRRPSTTGAGRH) the chain is on the cytoplasmic side.

This sequence belongs to the G-protein coupled receptor 1 family. In terms of assembly, heterodimer; with daf-37. Expressed in the ASI and ASK chemosensory neurons and in the IL-2 interneurons, but weakly expressed in other head neurons in hermaphrodites.

The protein localises to the cell membrane. In terms of biological role, G-protein coupled receptor (GPCR) that forms a heterodimer with daf-37 to control dauer formation and behavior. Required for the response to dauer inducing pheromones such as the ascarosides ascr#2, ascr#3 and ascr#5. The protein is G-protein coupled receptor daf-38 of Caenorhabditis elegans.